We begin with the raw amino-acid sequence, 123 residues long: Small ribosomal subunit protein uS12 (123 aa).

3-methylthioaspartic acid is present on Asp-89.

It belongs to the universal ribosomal protein uS12 family. In terms of assembly, part of the 30S ribosomal subunit. Contacts proteins S8 and S17. May interact with IF1 in the 30S initiation complex.

Functionally, with S4 and S5 plays an important role in translational accuracy. In terms of biological role, interacts with and stabilizes bases of the 16S rRNA that are involved in tRNA selection in the A site and with the mRNA backbone. Located at the interface of the 30S and 50S subunits, it traverses the body of the 30S subunit contacting proteins on the other side and probably holding the rRNA structure together. The combined cluster of proteins S8, S12 and S17 appears to hold together the shoulder and platform of the 30S subunit. In Syntrophotalea carbinolica (strain DSM 2380 / NBRC 103641 / GraBd1) (Pelobacter carbinolicus), this protein is Small ribosomal subunit protein uS12.